The chain runs to 494 residues: Ketol-acid reductoisomerase (NADP(+)) (494 aa).

Residues L14 to S208 form the KARI N-terminal Rossmann domain. Residues C45 to Q48, R68, R76, S78, and D108 to Q110 each bind NADP(+). The active site involves H132. G158 serves as a coordination point for NADP(+). 2 consecutive KARI C-terminal knotted domains span residues S209–T344 and T345–M487. Mg(2+) contacts are provided by D217, E221, E389, and E393. S414 contacts substrate.

The protein belongs to the ketol-acid reductoisomerase family. Mg(2+) is required as a cofactor.

It catalyses the reaction (2R)-2,3-dihydroxy-3-methylbutanoate + NADP(+) = (2S)-2-acetolactate + NADPH + H(+). The enzyme catalyses (2R,3R)-2,3-dihydroxy-3-methylpentanoate + NADP(+) = (S)-2-ethyl-2-hydroxy-3-oxobutanoate + NADPH + H(+). It participates in amino-acid biosynthesis; L-isoleucine biosynthesis; L-isoleucine from 2-oxobutanoate: step 2/4. It functions in the pathway amino-acid biosynthesis; L-valine biosynthesis; L-valine from pyruvate: step 2/4. Involved in the biosynthesis of branched-chain amino acids (BCAA). Catalyzes an alkyl-migration followed by a ketol-acid reduction of (S)-2-acetolactate (S2AL) to yield (R)-2,3-dihydroxy-isovalerate. In the isomerase reaction, S2AL is rearranged via a Mg-dependent methyl migration to produce 3-hydroxy-3-methyl-2-ketobutyrate (HMKB). In the reductase reaction, this 2-ketoacid undergoes a metal-dependent reduction by NADPH to yield (R)-2,3-dihydroxy-isovalerate. In Vibrio cholerae serotype O1 (strain ATCC 39541 / Classical Ogawa 395 / O395), this protein is Ketol-acid reductoisomerase (NADP(+)).